We begin with the raw amino-acid sequence, 132 residues long: Long-chain acyl-CoA thioesterase FadM (132 aa).

Residue D13 is part of the active site.

Belongs to the 4-hydroxybenzoyl-CoA thioesterase family. Homotetramer.

It catalyses the reaction (3E,5Z)-tetradecadienoyl-CoA + H2O = (3E,5Z)-tetradecadienoate + CoA + H(+). It carries out the reaction (3E,5Z)-dodecadienoyl-CoA + H2O = (3E,5Z)-dodecadienoate + CoA + H(+). The enzyme catalyses (9Z)-octadecenoyl-CoA + H2O = (9Z)-octadecenoate + CoA + H(+). The catalysed reaction is octadecanoyl-CoA + H2O = octadecanoate + CoA + H(+). It catalyses the reaction hexadecanoyl-CoA + H2O = hexadecanoate + CoA + H(+). It carries out the reaction (3S)-hydroxytetradecanoyl-CoA + H2O = (3S)-hydroxytetradecanoate + CoA + H(+). The enzyme catalyses tetradecanoyl-CoA + H2O = tetradecanoate + CoA + H(+). Functionally, long-chain acyl-CoA thioesterase that could be involved in beta-oxidation of fatty acids. Is most active with 3,5-tetradecadienoyl-CoA, a metabolite of oleic acid that is hydrolyzed during oleate beta-oxidation, but can also use other substrates such as 3,5-dodecadienoyl-CoA, 9-cis-octadecenoyl-CoA, octadecanoyl-CoA, hexadecanoyl-CoA, 3-hydroxytetradecanoyl-CoA and tetradecanoyl-CoA. The sequence is that of Long-chain acyl-CoA thioesterase FadM from Escherichia coli (strain K12).